We begin with the raw amino-acid sequence, 623 residues long: Protein vein (623 aa).

The first 40 residues, 1–40 (MYAQHLRKWSLKTKKQLMPLILLIISYMLLLNTCVLSSSA), serve as a signal peptide directing secretion. Disordered stretches follow at residues 70 to 98 (IPLS…SSNN), 130 to 162 (DAGS…SMQK), 184 to 214 (AASS…NYSS), and 229 to 317 (PESM…QRYN). Low complexity-rich tracts occupy residues 72–98 (LSSD…SSNN) and 136–158 (PAQQ…QQQQ). An N-linked (GlcNAc...) asparagine glycan is attached at Asn76. The N-linked (GlcNAc...) asparagine glycan is linked to Asn211. Over residues 233–248 (LEDRSPEQAARSRRDG) the composition is skewed to basic and acidic residues. Asn252 carries N-linked (GlcNAc...) asparagine glycosylation. Over residues 255 to 267 (RQQQRTGHRQQLQ) the composition is skewed to low complexity. Positions 305–316 (QRRKHQRKHQRY) are enriched in basic residues. Asn350, Asn381, Asn424, Asn449, Asn521, and Asn574 each carry an N-linked (GlcNAc...) asparagine glycan. The 86-residue stretch at 457-542 (TKIFSKPSKA…AKNKASKAIA (86 aa)) folds into the Ig-like C2-type domain. 4 cysteine pairs are disulfide-bonded: Cys478/Cys531, Cys566/Cys577, Cys571/Cys588, and Cys590/Cys599. In terms of domain architecture, EGF-like spans 561-599 (ASGIPCNFDYCFHNGTCRMIPDINEVYCRCPTEYFGNRC).

It is found in the secreted. In terms of biological role, ligand for the EGF receptor. Seems to play a role in the global proliferation of wing disc cells and the larval patterning. Shows a strong synergistic genetic interaction with spi, suggesting a molecular interdependence. Required for the development of interveins cells. The chain is Protein vein (vn) from Drosophila melanogaster (Fruit fly).